The sequence spans 418 residues: AP-3 complex subunit mu-1 (418 aa).

Positions 176 to 417 constitute an MHD domain; that stretch reads NNEAYFDVIE…ITKAGKFQVR (242 aa).

The protein belongs to the adaptor complexes medium subunit family. As to quaternary structure, the AP-3 complex associates with the BLOC-1 complex.

It is found in the golgi apparatus. Its subcellular location is the cytoplasmic vesicle membrane. Its function is as follows. Part of the AP-3 complex, an adaptor-related complex which is not clathrin-associated. The complex is associated with the Golgi region as well as more peripheral structures. It facilitates the budding of vesicles from the Golgi membrane and may be directly involved in trafficking to lysosomes. In concert with the BLOC-1 complex, AP-3 is required to target cargos into vesicles assembled at cell bodies for delivery into neurites and nerve terminals. The polypeptide is AP-3 complex subunit mu-1 (AP3M1) (Gallus gallus (Chicken)).